The chain runs to 246 residues: Flagellar brake protein YcgR (246 aa).

Residues 122-234 (QRREFFRIQT…PMETIIQRYV (113 aa)) enclose the PilZ domain.

The protein belongs to the YcgR family. In terms of assembly, monomer. Interacts with the flagellar basal bodies.

The protein localises to the bacterial flagellum basal body. Acts as a flagellar brake, regulating swimming and swarming in a bis-(3'-5') cyclic diguanylic acid (c-di-GMP)-dependent manner. Binds 1 c-di-GMP dimer per subunit. Increasing levels of c-di-GMP lead to decreased motility. This Chromobacterium violaceum (strain ATCC 12472 / DSM 30191 / JCM 1249 / CCUG 213 / NBRC 12614 / NCIMB 9131 / NCTC 9757 / MK) protein is Flagellar brake protein YcgR.